We begin with the raw amino-acid sequence, 814 residues long: Rho GTPase-activating protein 26 (814 aa).

Residues 7–262 (EFSDCCLDSP…MKENPLEHKT (256 aa)) form the BAR domain. In terms of domain architecture, PH spans 265–369 (PYTMEGYLYV…WMEAMDGREP (105 aa)). Residues 383–568 (AQLDSIGFSI…ILIENHEKIF (186 aa)) enclose the Rho-GAP domain. Disordered regions lie at residues 584–618 (SRKKSSDSKPPSCSKRPLTLFHAVPSTEKQEQRNS) and 638–696 (SSSL…SSDS). Low complexity-rich tracts occupy residues 591–600 (SKPPSCSKRP) and 638–661 (SSSLQPNLNSSDSNLDVVKPSRPS). The span at 662–672 (SLPPNPSPTSP) shows a compositional bias: pro residues. Phosphoserine is present on Ser-668. Position 670 is a phosphothreonine (Thr-670). Residue Ser-671 is modified to Phosphoserine. The segment covering 673–696 (LSPSWPMFSAPSSPMPTSSTSSDS) has biased composition (low complexity). Residues 756–814 (TPFRKAKALYACQAEHDSELSFTAGTVFDNVHPSQEPGWLEGTLNGKTGLIPENYVEFL) form the SH3 domain.

As to quaternary structure, interacts with NYAP1, NYAP2 and MYO16. Interacts with MICAL1 and WDR44. Binds to the C-terminus of PTK2/FAK1. In terms of processing, phosphorylated in a PINK1-dependent fashion promoting retrograde mitochondrial trafficking and clustering.

It is found in the cell junction. Its subcellular location is the focal adhesion. The protein localises to the cytoplasm. The protein resides in the cytoskeleton. It localises to the endosome membrane. Functionally, GTPase-activating protein for RHOA and CDC42. Facilitates mitochondrial quality control by promoting Parkin-mediated recruitment of autophagosomes to damaged mitochondria. Associates with MICAL1 on the endosomal membrane to promote Rab8-Rab10-dependent tubule extension. After dissociation of MICAL1, recruits WDR44 which connects the endoplasmic reticulum (ER) with the endosomal tubule, thereby participating in the export of a subset of neosynthesized proteins. In Mus musculus (Mouse), this protein is Rho GTPase-activating protein 26 (Arhgap26).